The chain runs to 558 residues: Formate--tetrahydrofolate ligase (558 aa).

Residue 67–74 (TPAGEGKT) coordinates ATP.

It belongs to the formate--tetrahydrofolate ligase family.

It carries out the reaction (6S)-5,6,7,8-tetrahydrofolate + formate + ATP = (6R)-10-formyltetrahydrofolate + ADP + phosphate. The protein operates within one-carbon metabolism; tetrahydrofolate interconversion. The polypeptide is Formate--tetrahydrofolate ligase (Ruegeria sp. (strain TM1040) (Silicibacter sp.)).